Here is a 208-residue protein sequence, read N- to C-terminus: MVSRRVQALLDQLRAQGIKDEQVLNALAAVPREKFIDEAFEQKAWDNIALPIGQGQTISQPYMVARMTELLELTPQSRVLEIGTGSGYQTAILAHLVQHVCSVERIKGLQWQARRRLKNLDLHNVSTRHGDGWQGWQARAPFDAIIVTAAPPEIPTALMTQLDEGGILVLPVGEEHQYLKRVRRRGGEFIIDTVEAVRFVPLVKGELA.

Ser59 is a catalytic residue.

It belongs to the methyltransferase superfamily. L-isoaspartyl/D-aspartyl protein methyltransferase family.

It is found in the cytoplasm. It catalyses the reaction [protein]-L-isoaspartate + S-adenosyl-L-methionine = [protein]-L-isoaspartate alpha-methyl ester + S-adenosyl-L-homocysteine. In terms of biological role, catalyzes the methyl esterification of L-isoaspartyl residues in peptides and proteins that result from spontaneous decomposition of normal L-aspartyl and L-asparaginyl residues. It plays a role in the repair and/or degradation of damaged proteins. The protein is Protein-L-isoaspartate O-methyltransferase of Escherichia fergusonii (strain ATCC 35469 / DSM 13698 / CCUG 18766 / IAM 14443 / JCM 21226 / LMG 7866 / NBRC 102419 / NCTC 12128 / CDC 0568-73).